We begin with the raw amino-acid sequence, 447 residues long: uncharacterized protein (447 aa).

Residues C87, C93, C96, and C162 each contribute to the [4Fe-4S] cluster site. The S-adenosyl-L-methionine site is built by Q284, Y313, E334, and D375. The active-site Nucleophile is the C402.

The protein belongs to the class I-like SAM-binding methyltransferase superfamily. RNA M5U methyltransferase family.

This is an uncharacterized protein from Nanoarchaeum equitans (strain Kin4-M).